Here is a 331-residue protein sequence, read N- to C-terminus: POU domain, class 4, transcription factor 3 (331 aa).

Residues Thr-81 to Pro-97 show a composition bias toward low complexity. Residues Thr-81 to Thr-108 are disordered. Residues Asp-172–Glu-249 enclose the POU-specific domain. Positions Arg-267–Lys-326 form a DNA-binding region, homeobox.

The protein belongs to the POU transcription factor family. Class-4 subfamily. In terms of assembly, interaction with ISL1. In terms of tissue distribution, expressed in the nervous system. Expressed in the otic vesicle during embryogenesis. Expressed in the adult retina in a subset of retinal ganglion cells (RGCs), and at a lower level in the adult tectum. Not expressed in the adult olfactory bulb.

Its subcellular location is the nucleus. It localises to the cytoplasm. In terms of biological role, acts as a transcriptional activator. Acts by binding to sequences related to the consensus octamer motif 5'-ATGCAAAT-3' in the regulatory regions of its target genes. May play a role in specifying terminally differentiated neuronal phenotypes. This chain is POU domain, class 4, transcription factor 3 (pou4f3), found in Danio rerio (Zebrafish).